A 137-amino-acid chain; its full sequence is MASLSTTSLSFKAPSTTISQVLRKASSSQSVTFGRFTSSTKSLRLQISCAAKAETVQKVSDIVKEQLALAADVPLTAESKFSALGADSLDTVEIVMALEEKFNISVEESDAQNITTIQEAADLIEDLVQKKPAAETS.

Residues 1–48 constitute a chloroplast transit peptide; it reads MASLSTTSLSFKAPSTTISQVLRKASSSQSVTFGRFTSSTKSLRLQIS. The 76-residue stretch at 53–128 folds into the Carrier domain; it reads AETVQKVSDI…EAADLIEDLV (76 aa). Ser88 carries the O-(pantetheine 4'-phosphoryl)serine modification.

It belongs to the acyl carrier protein (ACP) family. Post-translationally, 4'-phosphopantetheine is transferred from CoA to a specific serine of apo-ACP by acpS. This modification is essential for activity because fatty acids are bound in thioester linkage to the sulfhydryl of the prosthetic group.

It localises to the plastid. Its subcellular location is the chloroplast. Functionally, carrier of the growing fatty acid chain in fatty acid biosynthesis that plays a major role in the biosynthesis of fatty acids in leaves. Required for the biosynthesis of chloroplast photosynthetic membrane lipids such as monogalactosyldiacylglycerol, digalactosyldiacylglycerol and phosphatidylglycerol. Is essential for the biosynthesis of the cuticular wax and cutin polymers in leaves, and for the establishment of systemic acquired resistance (SAR). This is Acyl carrier protein 4, chloroplastic (ACP4) from Arabidopsis thaliana (Mouse-ear cress).